We begin with the raw amino-acid sequence, 275 residues long: Translation initiation factor 2 subunit alpha (275 aa).

In terms of domain architecture, S1 motif spans Gly-12–Arg-83.

Belongs to the eIF-2-alpha family. Heterotrimer composed of an alpha, a beta and a gamma chain.

Its function is as follows. eIF-2 functions in the early steps of protein synthesis by forming a ternary complex with GTP and initiator tRNA. The polypeptide is Translation initiation factor 2 subunit alpha (eif2a) (Pyrococcus horikoshii (strain ATCC 700860 / DSM 12428 / JCM 9974 / NBRC 100139 / OT-3)).